The sequence spans 564 residues: Arginine--tRNA ligase (564 aa).

Positions 136 to 146 (ANPTGPLHMGN) match the 'HIGH' region motif.

Belongs to the class-I aminoacyl-tRNA synthetase family. As to quaternary structure, monomer.

The protein resides in the cytoplasm. It catalyses the reaction tRNA(Arg) + L-arginine + ATP = L-arginyl-tRNA(Arg) + AMP + diphosphate. The polypeptide is Arginine--tRNA ligase (Ruminiclostridium cellulolyticum (strain ATCC 35319 / DSM 5812 / JCM 6584 / H10) (Clostridium cellulolyticum)).